Reading from the N-terminus, the 276-residue chain is Sulfur carrier protein FdhD (276 aa).

Catalysis depends on cysteine 118, which acts as the Cysteine persulfide intermediate.

It belongs to the FdhD family.

Its subcellular location is the cytoplasm. Functionally, required for formate dehydrogenase (FDH) activity. Acts as a sulfur carrier protein that transfers sulfur from IscS to the molybdenum cofactor prior to its insertion into FDH. The chain is Sulfur carrier protein FdhD from Mycobacterium bovis (strain ATCC BAA-935 / AF2122/97).